The sequence spans 628 residues: MBT domain-containing protein 1 (628 aa).

The interval Met1–Asn31 is disordered. The segment at Pro45 to Arg80 adopts an FCS-type zinc-finger fold. Zn(2+) contacts are provided by Cys54, Cys57, Cys74, and Cys78. Lys115 carries the post-translational modification N6-acetyllysine. 4 MBT repeats span residues Phe141–Pro245, Thr253–Arg350, Phe351–Pro456, and Phe464–Pro560. Disordered stretches follow at residues Pro560–Met590 and Asn606–Pro628. Over residues Ser562–Ser573 the composition is skewed to low complexity. A compositionally biased stretch (basic residues) spans Lys574–Met590. A compositionally biased stretch (polar residues) spans Gln609–Ala620.

Monomer. Component of the NuA4 histone acetyltransferase complex. Interacts with EPC1; interaction is direct and promotes recruitment of MBTD1 into the NuA4 histone acetyltransferase complex.

The protein resides in the nucleus. Its subcellular location is the chromosome. In terms of biological role, chromatin reader component of the NuA4 histone acetyltransferase complex, a multiprotein complex involved in transcriptional activation of select genes principally by acetylation of nucleosomal histones H4 and H2A. The NuA4 complex plays a direct role in repair of DNA double-strand breaks (DSBs) by promoting homologous recombination (HR). MBTD1 specifically recognizes and binds monomethylated and dimethylated 'Lys-20' on histone H4 (H4K20me1 and H4K20me2, respectively). In the NuA4 complex, MBTD1 promotes recruitment of the complex to H4K20me marks by competing with TP53BP1 for binding to H4K20me. Following recruitment to H4K20me at DNA breaks, the NuA4 complex catalyzes acetylation of 'Lys-15' on histone H2A (H2AK15), blocking the ubiquitination mark required for TP53BP1 localization at DNA breaks, thereby promoting homologous recombination (HR). This Homo sapiens (Human) protein is MBT domain-containing protein 1.